The sequence spans 474 residues: Putative matrix metalloproteinase (474 aa).

The N-terminal stretch at Met1–Ser17 is a signal peptide. His189 is a binding site for Zn(2+). The active site involves Glu190. Zn(2+) is bound by residues His193 and His199. The Hemopexin repeat unit spans residues Ala299–Pro344.

This sequence belongs to the peptidase M10A family. Zn(2+) is required as a cofactor.

In Heliothis virescens ascovirus 3e (HvAV-3e), this protein is Putative matrix metalloproteinase.